A 338-amino-acid chain; its full sequence is Tetraacyldisaccharide 4'-kinase (338 aa).

66-73 serves as a coordination point for ATP; the sequence is IAGGAGKT.

Belongs to the LpxK family.

It catalyses the reaction a lipid A disaccharide + ATP = a lipid IVA + ADP + H(+). Its pathway is glycolipid biosynthesis; lipid IV(A) biosynthesis; lipid IV(A) from (3R)-3-hydroxytetradecanoyl-[acyl-carrier-protein] and UDP-N-acetyl-alpha-D-glucosamine: step 6/6. Transfers the gamma-phosphate of ATP to the 4'-position of a tetraacyldisaccharide 1-phosphate intermediate (termed DS-1-P) to form tetraacyldisaccharide 1,4'-bis-phosphate (lipid IVA). The chain is Tetraacyldisaccharide 4'-kinase from Delftia acidovorans (strain DSM 14801 / SPH-1).